Here is a 22-residue protein sequence, read N- to C-terminus: Cysteine proteinase (22 aa).

Residues 1–22 form a disordered region; it reads GADDSDWRKKGAVNVIXKDQGQ.

It belongs to the peptidase C1 family.

The chain is Cysteine proteinase from Trichomonas vaginalis.